The primary structure comprises 218 residues: Ras-related protein Rab11D (218 aa).

Position 20 to 27 (20 to 27 (GDSGVGKS)) interacts with GTP. Positions 42–50 (SKSTIGVEF) match the Effector region motif. Residues 68–72 (DTAGQ) and 126–129 (NKSD) each bind GTP. 2 S-geranylgeranyl cysteine lipidation sites follow: C215 and C216.

The protein belongs to the small GTPase superfamily. Rab family.

Its subcellular location is the cell membrane. The polypeptide is Ras-related protein Rab11D (RAB11D) (Lotus japonicus (Lotus corniculatus var. japonicus)).